Consider the following 281-residue polypeptide: MIENRRGLDIFCHIMLIIGVLLILFPLYVAFVAASLDDSQVFQAPMTLIPGPHLWQNISHIWHAGVGNNSTPFGLMLLNSFVMAFAITVGKITVSILSAYAIVYFRFPLRNLFFWLIFLTLMLPVEVRIFPTIEVIANLNLLDSYTGLTLPLMASATATFLFRQFFMTLPDELLEAARIDGAGAMRFFWDIVLPLSKTNLAALFVITFIYGWNQYLWPILITSDASMGTAVAGIRSMISTSGAPTQWNQVMAAMILTLIPPVVVVLLMQRWFVRGLVDSEK.

The next 6 membrane-spanning stretches (helical) occupy residues 14–34 (IMLIIGVLLILFPLYVAFVAA), 85–105 (FAITVGKITVSILSAYAIVYF), 113–133 (FFWLIFLTLMLPVEVRIFPTI), 142–162 (LDSYTGLTLPLMASATATFLF), 201–221 (AALFVITFIYGWNQYLWPILI), and 247–267 (WNQVMAAMILTLIPPVVVVLL). Positions 77–268 (LLNSFVMAFA…IPPVVVVLLM (192 aa)) constitute an ABC transmembrane type-1 domain.

Belongs to the binding-protein-dependent transport system permease family. UgpAE subfamily. In terms of assembly, the complex is composed of two ATP-binding proteins (UgpC), two transmembrane proteins (UgpA and UgpE) and a solute-binding protein (UgpB).

It localises to the cell inner membrane. Its function is as follows. Part of the ABC transporter complex UgpBAEC involved in sn-glycerol-3-phosphate (G3P) import. Probably responsible for the translocation of the substrate across the membrane. The chain is sn-glycerol-3-phosphate transport system permease protein UgpE (ugpE) from Yersinia pestis bv. Antiqua (strain Antiqua).